Here is a 290-residue protein sequence, read N- to C-terminus: MPAQILDGKAIAAKRRALVGEAVGQRIERGLRRPGLAVILVGQNPASAVYVRNKRRACEEAGILSRAYDLDADVSEGELLERIDRLNADPEIDGILVQLPLPGHIDEQTVIERIDPVKDVDGFHPENMGRLALRLPGLRPCTPRGVMTLLHHTGIELEGRDAVVLGQSNIVGRPMTLELLNARCTVTVCHSRTRNVAERVRQADLVVASVGKPGLIQGDWIGEGAVVIDVGINRLDSGKLTGDVDFEAASQRASWITPVPGGVGPMTVATLLENTLDAARNRDELTAAAC.

NADP(+) contacts are provided by residues 166-168 (GQS), Ser-191, and Ile-232.

This sequence belongs to the tetrahydrofolate dehydrogenase/cyclohydrolase family. As to quaternary structure, homodimer.

It catalyses the reaction (6R)-5,10-methylene-5,6,7,8-tetrahydrofolate + NADP(+) = (6R)-5,10-methenyltetrahydrofolate + NADPH. The catalysed reaction is (6R)-5,10-methenyltetrahydrofolate + H2O = (6R)-10-formyltetrahydrofolate + H(+). The protein operates within one-carbon metabolism; tetrahydrofolate interconversion. Catalyzes the oxidation of 5,10-methylenetetrahydrofolate to 5,10-methenyltetrahydrofolate and then the hydrolysis of 5,10-methenyltetrahydrofolate to 10-formyltetrahydrofolate. The polypeptide is Bifunctional protein FolD (Halorhodospira halophila (strain DSM 244 / SL1) (Ectothiorhodospira halophila (strain DSM 244 / SL1))).